A 204-amino-acid polypeptide reads, in one-letter code: ADP-ribosylation factor-like protein 15 (204 aa).

GTP-binding positions include 39 to 46, 82 to 86, and 142 to 145; these read GLTGSGKT, ELGGA, and NHQD.

This sequence belongs to the small GTPase superfamily. Arf family.

The protein is ADP-ribosylation factor-like protein 15 (ARL15) of Homo sapiens (Human).